The primary structure comprises 517 residues: MDIVGGQNLRQMWDDLAGVYGDKTALIFESCEGIVRQFSYASLNEEINRTANLFYSLGIRKGDRVALHLDNCPEFIFCWFGLAKIGAIMVPINARLLGEESAWILQNSQVSLLVTSVQFYPMYREIRQDNSTPLNHICLIGEQLPADDGVSHFSQLQARQSATLCYTPALSTDDTAEILFTSGTTSRPKGVVITHYNLRFAGYYSAWQIALRDDDVYMTVMPAFHIDCQCTAAMPAFSAGSTFVLLEKYSARAFWDQVRKYQATVTECIPMMIRTLMVQPAAPTDRQHHLREVMFYLNLSEQEKDDFTERFGVRLLTSYGMTETIVGIIGDRPGDKRRWPSIGRVGFSYEAEIRDDQNRPLPAGEIGEICIKGIPGKTIFKEYYMQPEATARALEPEGWLHTGDSGYQDEDGYFYFVDRRCNMIKRGGENVSCVELENIISAHPKIQDIVVVGIKDAIRDEAIKAFIVLNEGETLSEAEFFSFCENNMAKFKVPSFMEIRTDLPRNCSGKIIKKNLK.

It belongs to the ATP-dependent AMP-binding enzyme family.

The enzyme catalyses 4-(trimethylamino)butanoate + ATP + CoA = 4-(trimethylamino)butanoyl-CoA + AMP + diphosphate. It catalyses the reaction crotonobetaine + ATP + CoA = crotonobetainyl-CoA + AMP + diphosphate. The catalysed reaction is (R)-carnitine + ATP + CoA = (R)-carnitinyl-CoA + AMP + diphosphate. Its pathway is amine and polyamine metabolism; carnitine metabolism. Catalyzes the transfer of CoA to carnitine, generating the initial carnitinyl-CoA needed for the CaiB reaction cycle. Also has activity toward crotonobetaine and gamma-butyrobetaine. In Salmonella enteritidis PT4 (strain P125109), this protein is Crotonobetaine/carnitine--CoA ligase.